The following is a 691-amino-acid chain: Putative calcium up-regulated protein I (691 aa).

The 128-residue stretch at 47–174 (SNCYLKEKPQ…NYTSQIWTYN (128 aa)) folds into the Ricin B-type lectin domain.

This sequence belongs to the cup family.

The polypeptide is Putative calcium up-regulated protein I (cupI) (Dictyostelium discoideum (Social amoeba)).